Consider the following 147-residue polypeptide: D(1B) dopamine receptor (147 aa).

A helical transmembrane segment spans residues 1–12 (SILISFPVQLNW). Residues 13–55 (HRDQAGSWGGLDLTNNLANWTPWEEDVWEPDVRAENCDSSLNR) lie on the Extracellular side of the membrane. The N-linked (GlcNAc...) asparagine glycan is linked to Asn54. A helical transmembrane segment spans residues 56–78 (TYAISSSLVSFYIPVAIMIVTYT). Over 79-128 (RIYRIAQVQIRRISSLERAAEHAQSCRSSAACAPDTSLRASIKKETKVLK) the chain is Cytoplasmic. Residues 129 to 147 (TLSVIMGVFVCCWLPFFIL) form a helical membrane-spanning segment.

It belongs to the G-protein coupled receptor 1 family.

The protein resides in the cell membrane. Dopamine receptor whose activity is mediated by G proteins which activate adenylyl cyclase. The protein is D(1B) dopamine receptor (DRD5) of Macaca mulatta (Rhesus macaque).